A 133-amino-acid chain; its full sequence is MKDWLDEIHWNADGLVPAIAQDHKTGRILMMAWMNRESLALTVRENRAIYWSRSRGKLWRKGEESGHLQKVHEVRLDCDADVIVLQVEQLGGIACHTGRESCFYRVFEDGAWKVVEPILKDPDAIYHAGHRHE.

Asp-77 provides a ligand contact to Mg(2+). Cys-78 serves as a coordination point for Zn(2+). Positions 79 and 81 each coordinate Mg(2+). Zn(2+)-binding residues include Cys-95 and Cys-102.

Belongs to the PRA-CH family. As to quaternary structure, homodimer. Requires Mg(2+) as cofactor. It depends on Zn(2+) as a cofactor.

It is found in the cytoplasm. The catalysed reaction is 1-(5-phospho-beta-D-ribosyl)-5'-AMP + H2O = 1-(5-phospho-beta-D-ribosyl)-5-[(5-phospho-beta-D-ribosylamino)methylideneamino]imidazole-4-carboxamide. The protein operates within amino-acid biosynthesis; L-histidine biosynthesis; L-histidine from 5-phospho-alpha-D-ribose 1-diphosphate: step 3/9. Functionally, catalyzes the hydrolysis of the adenine ring of phosphoribosyl-AMP. This is Phosphoribosyl-AMP cyclohydrolase from Azotobacter chroococcum mcd 1.